A 106-amino-acid polypeptide reads, in one-letter code: UPF0145 protein CPF_0876 (106 aa).

It belongs to the UPF0145 family.

This Clostridium perfringens (strain ATCC 13124 / DSM 756 / JCM 1290 / NCIMB 6125 / NCTC 8237 / Type A) protein is UPF0145 protein CPF_0876.